The sequence spans 335 residues: uncharacterized protein (335 aa).

Disordered regions lie at residues 153–174 (LNDK…SDRI), 218–239 (HTSV…QEEV), and 254–295 (RCKV…PVTS). Residues 156–170 (KEDEEKLDQTTESEE) are compositionally biased toward acidic residues. Composition is skewed to low complexity over residues 222–234 (RRSM…SASS) and 275–295 (THTS…PVTS).

This is an uncharacterized protein from Caenorhabditis elegans.